Here is a 505-residue protein sequence, read N- to C-terminus: Lysine--tRNA ligase (505 aa).

Positions 415 and 422 each coordinate Mg(2+).

It belongs to the class-II aminoacyl-tRNA synthetase family. In terms of assembly, homodimer. Requires Mg(2+) as cofactor.

The protein resides in the cytoplasm. The enzyme catalyses tRNA(Lys) + L-lysine + ATP = L-lysyl-tRNA(Lys) + AMP + diphosphate. This Citrobacter koseri (strain ATCC BAA-895 / CDC 4225-83 / SGSC4696) protein is Lysine--tRNA ligase.